The chain runs to 342 residues: MKGKFLKVSSLFVATLTTATLVSSPAANALSSKAMDNHPQQTQSSKQQTPKIKKGGNLKPLEQREHANVILPNNDRHQITDTTNGHYAPVTYIQVEAPTGTFIASGVVVGKDTLLTNKHVVDATHGDPHALKAFPSAINQDNYPNGGFTAEQITKYSGEGDLAIVKFSPNEQNKHIGEVVKPATMSNNAETQVNQNITVTGYPGDKPVATMWESKGKITYLKGEAMQYDLSTTGGNSGSPVFNEKNEVIGIHWGGVPNEFNGAVFINENVRNFLKQNIEDIHFANDDQPNNPDNPDNPNNPDNPNNPDNPNNPDEPNNPDNPNNPDNPDNGDNNNSDNPDAA.

Residues 1-29 form the signal peptide; that stretch reads MKGKFLKVSSLFVATLTTATLVSSPAANA. A propeptide spanning residues 30–68 is cleaved from the precursor; sequence LSSKAMDNHPQQTQSSKQQTPKIKKGGNLKPLEQREHAN. Positions 33-63 are disordered; the sequence is KAMDNHPQQTQSSKQQTPKIKKGGNLKPLEQ. Residues 39–50 show a composition bias toward low complexity; it reads PQQTQSSKQQTP. Active-site charge relay system residues include H119, D161, and S237. A disordered region spans residues 283-342; it reads FANDDQPNNPDNPDNPNNPDNPNNPDNPNNPDEPNNPDNPNNPDNPDNGDNNNSDNPDAA. The span at 286–342 shows a compositional bias: low complexity; it reads DDQPNNPDNPDNPNNPDNPNNPDNPNNPDEPNNPDNPNNPDNPDNGDNNNSDNPDAA. Tandem repeats lie at residues 289–291, 292–294, 295–297, 298–300, 301–303, 304–306, 307–309, 310–312, 316–318, 319–321, 322–324, 325–327, and 328–330. The 13 X 3 AA repeats of P-[DN]-N stretch occupies residues 289 to 330; the sequence is PNNPDNPDNPNNPDNPNNPDNPNNPDEPNNPDNPNNPDNPDN.

This sequence belongs to the peptidase S1B family. Proteolytically cleaved by aureolysin (aur). This cleavage leads to the activation of SspA.

It localises to the secreted. It catalyses the reaction Preferential cleavage: Glu-|-Xaa, Asp-|-Xaa.. Preferentially cleaves peptide bonds on the carboxyl-terminal side of aspartate and glutamate. Along with other extracellular proteases it is involved in colonization and infection of human tissues. Required for proteolytic maturation of thiol protease SspB and inactivation of SspC, an inhibitor of SspB. It is the most important protease for degradation of fibronectin-binding protein (FnBP) and surface protein A, which are involved in adherence to host cells. May also protect bacteria against host defense mechanism by cleaving the immunoglobulin classes IgG, IgA and IgM. May be involved in the stability of secreted lipases. This Staphylococcus aureus (strain Mu50 / ATCC 700699) protein is Glutamyl endopeptidase (sspA).